The primary structure comprises 430 residues: UPF0597 protein DSY1109 (430 aa).

The protein belongs to the UPF0597 family.

This is UPF0597 protein DSY1109 from Desulfitobacterium hafniense (strain Y51).